Consider the following 258-residue polypeptide: 2S seed storage albumin protein (258 aa).

The signal sequence occupies residues 1 to 24 (MAKLIPTIALVSVLLFIIANASFA). A propeptide spanning residues 25-35 (YRTTITTIEID) is cleaved from the precursor. 4 disulfides stabilise this stretch: C49–C108, C61–C97, C98–C145, and C110–C149. Positions 64 to 87 (YLRQSSSRRSPGEEVLRMPGDENQ) are disordered. S69 carries the phosphoserine modification. The segment covering 73-83 (SPGEEVLRMPG) has biased composition (basic and acidic residues). Residues 77–86 (EVLRMPGDEN) constitute a propeptide that is removed on maturation. Position 87 is a pyrrolidone carboxylic acid (Q87). 2 consecutive propeptides follow at residues 154 to 156 (RTN) and 191 to 193 (SDN). 4 disulfides stabilise this stretch: C162–C212, C175–C201, C202–C249, and C214–C256. The residue at position 194 (Q194) is a Pyrrolidone carboxylic acid.

Belongs to the 2S seed storage albumins family. In terms of assembly, the 2 mature proteins consist of heterodimers of a small and a large chain; disulfide-linked. The N-terminus of both large chains is blocked. In terms of processing, the C-terminus of the allergen Ric c 1 and allergen Ric c 3 small chains are heterogeneous and the length of the chains can vary from 33 to 36 amino acids and from 36 to 40 amino acids respectively.

Functionally, 2S seed storage proteins. This is 2S seed storage albumin protein from Ricinus communis (Castor bean).